Here is a 478-residue protein sequence, read N- to C-terminus: Cytochrome c-552 (478 aa).

Positions 1 to 26 (MARKTLRARRFFSLIFPFFFITSVYA) are cleaved as a signal peptide. Residue His94 participates in heme c binding. Cys122, Cys125, and Lys126 together coordinate heme. Cys160, Cys163, His164, Cys209, Cys212, and His213 together coordinate heme c. Ca(2+)-binding residues include Glu215, Tyr216, Lys261, and Gln263. Position 216 (Tyr216) interacts with substrate. His264 serves as a coordination point for substrate. Residues His275, Cys282, Cys285, His286, His301, Cys314, Cys317, His318, and His393 each contribute to the heme c site.

This sequence belongs to the cytochrome c-552 family. The cofactor is Ca(2+). Heme c serves as cofactor.

The protein resides in the periplasm. It catalyses the reaction 6 Fe(III)-[cytochrome c] + NH4(+) + 2 H2O = 6 Fe(II)-[cytochrome c] + nitrite + 8 H(+). The protein operates within nitrogen metabolism; nitrate reduction (assimilation). Functionally, catalyzes the reduction of nitrite to ammonia, consuming six electrons in the process. This is Cytochrome c-552 from Salmonella schwarzengrund (strain CVM19633).